The chain runs to 395 residues: MRN complex-interacting protein (395 aa).

A compositionally biased stretch (basic and acidic residues) spans Asp-90 to Val-100. Disordered stretches follow at residues Asp-90–Cys-155 and Lys-180–Ser-275. Over residues Ser-104–Gly-113 the composition is skewed to polar residues. A compositionally biased stretch (acidic residues) spans Glu-117–Val-127. The Nuclear localization signal (NLS) signature appears at Arg-142–Met-145. The segment covering Ser-183–Ser-195 has biased composition (low complexity). Composition is skewed to polar residues over residues Ala-224–Ser-244 and Gln-260–Gln-270.

Belongs to the MRNIP family.

It localises to the nucleus. The protein resides in the nucleoplasm. Functionally, plays a role in the cellular response to DNA damage and the maintenance of genome stability through its association with the MRN damage-sensing complex. Promotes chromatin loading and activity of the MRN complex to facilitate subsequent ATM-mediated DNA damage response signaling and DNA repair. The protein is MRN complex-interacting protein of Danio rerio (Zebrafish).